A 20-amino-acid chain; its full sequence is Pregnancy-associated glycoprotein 61C (20 aa).

The protein belongs to the peptidase A1 family. N-glycosylated. Expressed in chorionic epithelium (trophectoderm).

The protein resides in the secreted. The protein localises to the extracellular space. The polypeptide is Pregnancy-associated glycoprotein 61C (Bubalus bubalis (Domestic water buffalo)).